The following is a 272-amino-acid chain: Oligodendrocyte transcription factor 3 (272 aa).

Residues 1-14 (MNSDSSSVSSRASS) show a composition bias toward low complexity. A disordered region spans residues 1–71 (MNSDSSSVSS…KAAGESSKYK (71 aa)). Positions 24–33 (DHHHRHHHHQ) are enriched in basic residues. Over residues 36–46 (RLNSVSSTQGD) the composition is skewed to polar residues. Positions 68-89 (SKYKIKKQLSEQDLQQLRLKIN) form a coiled coil. Positions 83–137 (QLRLKINGRERKRMHDLNLAMDGLREVMPYAHGPSVRKLSKIATLLLARNYILML) constitute a bHLH domain.

It localises to the nucleus. In terms of biological role, may determine the distinct specification program of class A neurons in the dorsal part of the spinal cord and suppress specification of class B neurons. The polypeptide is Oligodendrocyte transcription factor 3 (OLIG3) (Homo sapiens (Human)).